The primary structure comprises 383 residues: MSSVEFSNQPVVIDNGSGVIKAGFAGQDPPSHIFQSLVGNPKYKKVMGLNIENESTYFVGDRINDWRGILKLKHPMDHGIVSNWSDMERVWTYTYDQLKIQPSEHPVLLTDVPNNPRLHRERAAQLFFETYNAPALYFSIPAVLSLYASGRTTGIVLDSGDGVTHVVPVFEGFALPHAISRIDIAGRDITEYLQHLLRRSGYNFKTSAEKEVVRIIKEKTCYVAHDPQKEEELLEPDSSSSKPVQPQYTLPDGNVIELGAERFRAPEILFHPDIIGDESLGIHQCLDMSIRKSDLDLRKTFYSNIILGGGSTLFQGFGDRLLNEVKKLAPKDIKIKITAPPERKYSAWMGGSILASLSTFKDLWVTRQEYEEDGCSVIHRKIF.

A disordered region spans residues 227 to 246 (PQKEEELLEPDSSSSKPVQP).

It belongs to the actin family. ARP1 subfamily.

The protein localises to the cytoplasm. It localises to the cytoskeleton. The protein resides in the microtubule organizing center. It is found in the centrosome. In terms of biological role, component of a multi-subunit complex, PPK2 (poly P kinase complex 2) involved in microtubule based vesicle motility. It is associated with the centrosome. PPK2 complex can synthesize a poly chain of hundreds of phosphate residues linked by ATP-like bonds. This chain is Centractin (arpA), found in Dictyostelium discoideum (Social amoeba).